The following is a 359-amino-acid chain: NADH-quinone oxidoreductase subunit H (359 aa).

A run of 8 helical transmembrane segments spans residues 19 to 39 (IGWFPLGLVIVAAIPLVFIAL), 94 to 114 (FLFVIGPGILFVGSFLAFAVL), 127 to 147 (VGLFYAVGIVAIEVVGILAAG), 175 to 195 (IALLCAAMLAGTLSMQQIILM), 202 to 222 (FLHWFLFTNPIAWLPFLIYFI), 255 to 275 (FAVIFLAEYGSMFMVSAIISI), 301 to 321 (VWGAFWIIMKGFFFIFVQMWL), and 337 to 357 (CWKVLTPFSLVSFVLTAIWVI).

It belongs to the complex I subunit 1 family. As to quaternary structure, NDH-1 is composed of 14 different subunits. Subunits NuoA, H, J, K, L, M, N constitute the membrane sector of the complex.

The protein resides in the cell inner membrane. The catalysed reaction is a quinone + NADH + 5 H(+)(in) = a quinol + NAD(+) + 4 H(+)(out). Functionally, NDH-1 shuttles electrons from NADH, via FMN and iron-sulfur (Fe-S) centers, to quinones in the respiratory chain. The immediate electron acceptor for the enzyme in this species is believed to be ubiquinone. Couples the redox reaction to proton translocation (for every two electrons transferred, four hydrogen ions are translocated across the cytoplasmic membrane), and thus conserves the redox energy in a proton gradient. This subunit may bind ubiquinone. This chain is NADH-quinone oxidoreductase subunit H, found in Chlorobaculum tepidum (strain ATCC 49652 / DSM 12025 / NBRC 103806 / TLS) (Chlorobium tepidum).